We begin with the raw amino-acid sequence, 456 residues long: Gamma-glutamyl phosphate reductase (456 aa).

This sequence belongs to the gamma-glutamyl phosphate reductase family.

It localises to the cytoplasm. The enzyme catalyses L-glutamate 5-semialdehyde + phosphate + NADP(+) = L-glutamyl 5-phosphate + NADPH + H(+). Its pathway is amino-acid biosynthesis; L-proline biosynthesis; L-glutamate 5-semialdehyde from L-glutamate: step 2/2. In terms of biological role, catalyzes the NADPH-dependent reduction of L-glutamate 5-phosphate into L-glutamate 5-semialdehyde and phosphate. The product spontaneously undergoes cyclization to form 1-pyrroline-5-carboxylate. The polypeptide is Gamma-glutamyl phosphate reductase (Haloquadratum walsbyi (strain DSM 16790 / HBSQ001)).